A 447-amino-acid chain; its full sequence is Chromosomal replication initiator protein DnaA (447 aa).

The tract at residues 1 to 74 is domain I, interacts with DnaA modulators; sequence MPDVESFWHS…TGFKLTGAEV (74 aa). The interval 74-109 is domain II; it reads VMPHFVVADEKDAALAQELEEPAEEEVVFSEQSKKA. Residues 110–326 are domain III, AAA+ region; the sequence is MLNPKYTFDT…GALVRVQAFA (217 aa). The ATP site is built by glycine 154, glycine 156, lysine 157, and threonine 158. Residues 327–447 are domain IV, binds dsDNA; sequence TINGEDITTS…VSEIKNLLNS (121 aa).

Belongs to the DnaA family. Oligomerizes as a right-handed, spiral filament on DNA at oriC.

Its subcellular location is the cytoplasm. Its function is as follows. Plays an essential role in the initiation and regulation of chromosomal replication. ATP-DnaA binds to the origin of replication (oriC) to initiate formation of the DNA replication initiation complex once per cell cycle. Binds the DnaA box (a 9 base pair repeat at the origin) and separates the double-stranded (ds)DNA. Forms a right-handed helical filament on oriC DNA; dsDNA binds to the exterior of the filament while single-stranded (ss)DNA is stabiized in the filament's interior. The ATP-DnaA-oriC complex binds and stabilizes one strand of the AT-rich DNA unwinding element (DUE), permitting loading of DNA polymerase. After initiation quickly degrades to an ADP-DnaA complex that is not apt for DNA replication. Binds acidic phospholipids. Strand separation requires the DnaA boxes and adjacent DnaA-trio motifs as well as ATP. The protein is Chromosomal replication initiator protein DnaA of Enterococcus faecalis (strain ATCC 700802 / V583).